Consider the following 336-residue polypeptide: Iron-uptake system permease protein FeuC (336 aa).

9 helical membrane-spanning segments follow: residues 7–27 (LFIA…SFSV), 57–77 (VVMA…IQAI), 85–105 (PGIL…MLLF), 120–140 (MPLF…IFAW), 150–170 (IILV…FLSL), 191–211 (ANWT…PILI), 246–266 (VAII…GLIA), 280–300 (YILP…DFAG), and 308–328 (EVPA…YLLF).

The protein belongs to the binding-protein-dependent transport system permease family. FecCD subfamily. As to quaternary structure, the complex is composed of one ATP-binding protein (YusV), two transmembrane proteins (FeuB and FeuC) and a solute-binding protein (FeuA).

Its subcellular location is the cell membrane. In terms of biological role, involved in the uptake of iron. Probably responsible for the translocation of the substrate across the membrane. Its function is as follows. Part of the ABC transporter complex FeuABC/YusV involved in import of the catecholate siderophores bacillibactin and enterobactin. The protein is Iron-uptake system permease protein FeuC (feuC) of Bacillus subtilis (strain 168).